The sequence spans 253 residues: Transcription factor ORG2 (253 aa).

Residues 71–123 (VKKLNHNASERDRRKKINTLFSSLRSCLPASDQSKKLSIPETVSKSLKYIPEL) form the bHLH domain.

Homodimer. Roots.

It is found in the nucleus. In Arabidopsis thaliana (Mouse-ear cress), this protein is Transcription factor ORG2 (ORG2).